Reading from the N-terminus, the 385-residue chain is Zinc finger protein B385R (385 aa).

The segment at 166-190 (LQCPNCGCIQELMGTIFDETHFYNH) adopts a C2H2-type zinc-finger fold.

This sequence belongs to the asfivirus B385R family.

The polypeptide is Zinc finger protein B385R (Ornithodoros (relapsing fever ticks)).